We begin with the raw amino-acid sequence, 186 residues long: Peptidyl-tRNA hydrolase (186 aa).

Residue Tyr-13 coordinates tRNA. His-18 (proton acceptor) is an active-site residue. The tRNA site is built by Tyr-59, Asn-61, and Asn-107.

It belongs to the PTH family. In terms of assembly, monomer.

It is found in the cytoplasm. It carries out the reaction an N-acyl-L-alpha-aminoacyl-tRNA + H2O = an N-acyl-L-amino acid + a tRNA + H(+). Hydrolyzes ribosome-free peptidyl-tRNAs (with 1 or more amino acids incorporated), which drop off the ribosome during protein synthesis, or as a result of ribosome stalling. Functionally, catalyzes the release of premature peptidyl moieties from peptidyl-tRNA molecules trapped in stalled 50S ribosomal subunits, and thus maintains levels of free tRNAs and 50S ribosomes. In Thermotoga sp. (strain RQ2), this protein is Peptidyl-tRNA hydrolase.